The chain runs to 708 residues: Otogelin-like protein (708 aa).

A VWFD domain is found at 1–113; the sequence is KIIVNRLARK…SWEIEKSFEV (113 aa). Asn-553 is a glycosylation site (N-linked (GlcNAc...) asparagine). Cystine bridges form between Cys-616–Cys-672, Cys-637–Cys-686, Cys-648–Cys-703, and Cys-652–Cys-705. The CTCK domain occupies 616-708; it reads CKREERICQK…EPIDCTCQWN (93 aa).

It belongs to the otogelin family.

It is found in the secreted. In Pongo abelii (Sumatran orangutan), this protein is Otogelin-like protein (OTOGL).